The following is a 658-amino-acid chain: Pentatricopeptide repeat-containing protein 7, mitochondrial (658 aa).

A mitochondrion-targeting transit peptide spans 1-29; it reads MRNCVSPLLFAWTKHLRLREFKIPFPNRL. 2 PPR repeats span residues 130 to 164 and 220 to 254; these read VKKRFAECFDKNPDLCLIVYSKLEVETLAKITPIW and LYVELCLVYHFHNSHLGMDSSTVSNLKRFCFSESL.

The protein localises to the mitochondrion. In terms of biological role, mitochondrial RNA-binding protein required for the stability of the atp6 mRNA. The sequence is that of Pentatricopeptide repeat-containing protein 7, mitochondrial (ppr7) from Schizosaccharomyces pombe (strain 972 / ATCC 24843) (Fission yeast).